Here is a 100-residue protein sequence, read N- to C-terminus: NADH-quinone oxidoreductase subunit K (100 aa).

The next 3 helical transmembrane spans lie at 4-24 (TSYY…GVLL), 29-49 (IVVF…LVAF), and 60-80 (VIVF…LALL).

This sequence belongs to the complex I subunit 4L family. As to quaternary structure, NDH-1 is composed of 14 different subunits. Subunits NuoA, H, J, K, L, M, N constitute the membrane sector of the complex.

Its subcellular location is the cell membrane. It carries out the reaction a quinone + NADH + 5 H(+)(in) = a quinol + NAD(+) + 4 H(+)(out). Its function is as follows. NDH-1 shuttles electrons from NADH, via FMN and iron-sulfur (Fe-S) centers, to quinones in the respiratory chain. The immediate electron acceptor for the enzyme in this species is believed to be ubiquinone. Couples the redox reaction to proton translocation (for every two electrons transferred, four hydrogen ions are translocated across the cytoplasmic membrane), and thus conserves the redox energy in a proton gradient. The polypeptide is NADH-quinone oxidoreductase subunit K (Chloroflexus aurantiacus (strain ATCC 29366 / DSM 635 / J-10-fl)).